Reading from the N-terminus, the 375-residue chain is Queuine tRNA-ribosyltransferase (375 aa).

D89 (proton acceptor) is an active-site residue. Residues 89–93 (DSGGF), D143, Q187, and G214 contribute to the substrate site. The interval 245-251 (GVGKPED) is RNA binding. The Nucleophile role is filled by D264. Positions 269-273 (TRNAR) are RNA binding; important for wobble base 34 recognition. C302, C304, C307, and H333 together coordinate Zn(2+).

This sequence belongs to the queuine tRNA-ribosyltransferase family. As to quaternary structure, homodimer. Within each dimer, one monomer is responsible for RNA recognition and catalysis, while the other monomer binds to the replacement base PreQ1. The cofactor is Zn(2+).

The catalysed reaction is 7-aminomethyl-7-carbaguanine + guanosine(34) in tRNA = 7-aminomethyl-7-carbaguanosine(34) in tRNA + guanine. Its pathway is tRNA modification; tRNA-queuosine biosynthesis. Functionally, catalyzes the base-exchange of a guanine (G) residue with the queuine precursor 7-aminomethyl-7-deazaguanine (PreQ1) at position 34 (anticodon wobble position) in tRNAs with GU(N) anticodons (tRNA-Asp, -Asn, -His and -Tyr). Catalysis occurs through a double-displacement mechanism. The nucleophile active site attacks the C1' of nucleotide 34 to detach the guanine base from the RNA, forming a covalent enzyme-RNA intermediate. The proton acceptor active site deprotonates the incoming PreQ1, allowing a nucleophilic attack on the C1' of the ribose to form the product. After dissociation, two additional enzymatic reactions on the tRNA convert PreQ1 to queuine (Q), resulting in the hypermodified nucleoside queuosine (7-(((4,5-cis-dihydroxy-2-cyclopenten-1-yl)amino)methyl)-7-deazaguanosine). This chain is Queuine tRNA-ribosyltransferase, found in Aliivibrio salmonicida (strain LFI1238) (Vibrio salmonicida (strain LFI1238)).